A 222-amino-acid polypeptide reads, in one-letter code: Ethylene-inducing xylanase 2 (222 aa).

A signal peptide spans 1–19 (MITFSSLLVTFSAISTSLA). Residues 36–222 (QRNESSLVRR…GEGAATQTVS (187 aa)) enclose the GH11 domain. N-linked (GlcNAc...) asparagine glycosylation is found at N38 and N94. E120 functions as the Nucleophile in the catalytic mechanism. The Proton donor role is filled by E209.

The protein belongs to the glycosyl hydrolase 11 (cellulase G) family.

The enzyme catalyses Endohydrolysis of (1-&gt;4)-beta-D-xylosidic linkages in xylans.. Its pathway is glycan degradation; xylan degradation. In terms of biological role, endo-1,4-beta-xylanase involved in the hydrolysis of xylan, a major structural heterogeneous polysaccharide found in plant biomass representing the second most abundant polysaccharide in the biosphere, after cellulose. May act as an elicitor of plant defense responses in certain plants but does not exhibit any cell death when transiently expressed in N.benthamiana. In Botryotinia fuckeliana (strain B05.10) (Noble rot fungus), this protein is Ethylene-inducing xylanase 2.